Consider the following 86-residue polypeptide: Protein K3 homolog (86 aa).

The S1 motif domain maps to 15–86; that stretch reads NINDITQGII…LKGYIDVSIV (72 aa).

The protein belongs to the poxviridae K3 protein family. In terms of assembly, interacts with host PKR kinase.

Its function is as follows. Viral mimic of eIF-2-alpha that acts as a pseudosubstrate for EIF2AK2/PKR kinase. Inhibits therefore eIF-2-alpha phosphorylation by host EIF2AK2/PKR kinase and prevents protein synthesis shutoff. The protein is Protein K3 homolog of Sus scrofa (Pig).